A 473-amino-acid polypeptide reads, in one-letter code: Membrane protein TMS1 (473 aa).

Topologically, residues Met1–Ser6 are cytoplasmic. Residues Leu7 to Thr29 form a helical membrane-spanning segment. Residues Lys30–Ser38 are Vacuolar-facing. Residues Ser39–Tyr61 form a helical membrane-spanning segment. Residues Ser62–Gly81 lie on the Cytoplasmic side of the membrane. The helical transmembrane segment at Phe82–Thr104 threads the bilayer. At Gly105–Asn118 the chain is on the vacuolar side. A helical membrane pass occupies residues Ser119–Ile138. The Cytoplasmic segment spans residues Pro139–Ile144. The helical transmembrane segment at Phe145–Val167 threads the bilayer. Over Asp168 to Phe194 the chain is Vacuolar. Residues Leu195–Phe217 form a helical membrane-spanning segment. At Cys218–Ala228 the chain is on the cytoplasmic side. A helical transmembrane segment spans residues Val229–Pro246. Residues Lys247–Lys295 are Vacuolar-facing. Residues Phe296–Ala318 form a helical membrane-spanning segment. Residues Asn319–Asn398 are Cytoplasmic-facing. A helical transmembrane segment spans residues Tyr399–Val421. Topologically, residues Thr422–Thr435 are vacuolar. Residues Tyr436–Val458 form a helical membrane-spanning segment. Residues Ala459 to Tyr473 lie on the Cytoplasmic side of the membrane.

It belongs to the TDE1 family.

It localises to the membrane. The protein is Membrane protein TMS1 (TMS1) of Saccharomyces cerevisiae (strain ATCC 204508 / S288c) (Baker's yeast).